The following is a 377-amino-acid chain: Chaperone protein DnaJ (377 aa).

Residues 4-69 (DYYEALGVER…QKRAAYDRFG (66 aa)) enclose the J domain. The CR-type zinc-finger motif lies at 135–213 (GKTAQIRVPT…CHGQGRVTQE (79 aa)). Positions 148, 151, 165, 168, 187, 190, 201, and 204 each coordinate Zn(2+). CXXCXGXG motif repeat units lie at residues 148 to 155 (CDECSGSG), 165 to 172 (CTMCSGSG), 187 to 194 (CPTCNGRG), and 201 to 208 (CGKCHGQG).

It belongs to the DnaJ family. Homodimer. The cofactor is Zn(2+).

It localises to the cytoplasm. In terms of biological role, participates actively in the response to hyperosmotic and heat shock by preventing the aggregation of stress-denatured proteins and by disaggregating proteins, also in an autonomous, DnaK-independent fashion. Unfolded proteins bind initially to DnaJ; upon interaction with the DnaJ-bound protein, DnaK hydrolyzes its bound ATP, resulting in the formation of a stable complex. GrpE releases ADP from DnaK; ATP binding to DnaK triggers the release of the substrate protein, thus completing the reaction cycle. Several rounds of ATP-dependent interactions between DnaJ, DnaK and GrpE are required for fully efficient folding. Also involved, together with DnaK and GrpE, in the DNA replication of plasmids through activation of initiation proteins. In Brucella anthropi (strain ATCC 49188 / DSM 6882 / CCUG 24695 / JCM 21032 / LMG 3331 / NBRC 15819 / NCTC 12168 / Alc 37) (Ochrobactrum anthropi), this protein is Chaperone protein DnaJ.